The primary structure comprises 90 residues: Putative defensin-like protein 168 (90 aa).

An N-terminal signal peptide occupies residues Met-1–Ala-27. 4 disulfide bridges follow: Cys-32/Cys-90, Cys-43/Cys-66, Cys-51/Cys-84, and Cys-64/Cys-86.

Belongs to the DEFL family.

It localises to the secreted. This chain is Putative defensin-like protein 168, found in Arabidopsis thaliana (Mouse-ear cress).